Consider the following 152-residue polypeptide: Ferredoxin-thioredoxin reductase catalytic chain, chloroplastic (152 aa).

A chloroplast-targeting transit peptide spans 1–38 (MTSTVTTTVGCGGLPVRPLSTATRGRPRRCAVRAQAAG). Cys-91 contributes to the [4Fe-4S] cluster binding site. Cys-93 serves as the catalytic Nucleophile. An intrachain disulfide couples Cys-93 to Cys-123. Positions 110, 112, and 121 each coordinate [4Fe-4S] cluster.

It belongs to the ferredoxin thioredoxin reductase beta subunit family. Heterodimer of subunit A (variable subunit) and subunit B (catalytic subunit). Heterodimeric FTR forms a complex with ferredoxin and thioredoxin. [4Fe-4S] cluster serves as cofactor.

The protein localises to the plastid. The protein resides in the chloroplast. The enzyme catalyses [thioredoxin]-disulfide + 2 reduced [2Fe-2S]-[ferredoxin] + 2 H(+) = [thioredoxin]-dithiol + 2 oxidized [2Fe-2S]-[ferredoxin]. In terms of biological role, catalytic subunit of the ferredoxin-thioredoxin reductase (FTR), which catalyzes the two-electron reduction of thioredoxins by the electrons provided by reduced ferredoxin. This chain is Ferredoxin-thioredoxin reductase catalytic chain, chloroplastic (FTRC), found in Zea mays (Maize).